Reading from the N-terminus, the 459-residue chain is ATP-dependent protease ATPase subunit HslU (459 aa).

Residues Val-26, 68–73, Asp-271, Glu-337, and Arg-409 contribute to the ATP site; that span reads GVGKTE.

The protein belongs to the ClpX chaperone family. HslU subfamily. As to quaternary structure, a double ring-shaped homohexamer of HslV is capped on each side by a ring-shaped HslU homohexamer. The assembly of the HslU/HslV complex is dependent on binding of ATP.

It localises to the cytoplasm. Its function is as follows. ATPase subunit of a proteasome-like degradation complex; this subunit has chaperone activity. The binding of ATP and its subsequent hydrolysis by HslU are essential for unfolding of protein substrates subsequently hydrolyzed by HslV. HslU recognizes the N-terminal part of its protein substrates and unfolds these before they are guided to HslV for hydrolysis. In Xylella fastidiosa (strain 9a5c), this protein is ATP-dependent protease ATPase subunit HslU.